A 316-amino-acid chain; its full sequence is Transcription initiation factor IIB (316 aa).

The segment at 7 to 38 adopts a TFIIB-type zinc-finger fold; that stretch reads FRLRCPVCGSTDIVFNEETGEYVCARCGTIVL. Zn(2+) contacts are provided by C11, C14, C30, and C33. Residues 51-73 form a disordered region; sequence FTPEERERRGRTGAPLSPTLHDH. 2 consecutive repeat copies span residues 124-207 and 218-299.

The protein belongs to the TFIIB family.

Stabilizes TBP binding to an archaeal box-A promoter. Also responsible for recruiting RNA polymerase II to the pre-initiation complex (DNA-TBP-TFIIB). This is Transcription initiation factor IIB from Ignicoccus hospitalis (strain KIN4/I / DSM 18386 / JCM 14125).